Reading from the N-terminus, the 213-residue chain is MANETVLYDYWRSSASYRVRIALNLCGEAYRSVPVDLLAKAHRAPEHLARNPQGLVPVLDIDGERLTQSLAIIEYLAETRDGTGLLPAHPIDRQRVRALSYAVAMDIHPVCNLGVVARVMAGAGDGEAARREWMQKFIGEGLAAFERMLDHPATGAFCHGDRPTMADLCLVPQVYNARRWDVDLAACPLLVAIDRRCAGIDAFQRAHPDRAKP.

The GST N-terminal domain maps to 3–84; sequence NETVLYDYWR…YLAETRDGTG (82 aa). The region spanning 89-213 is the GST C-terminal domain; the sequence is HPIDRQRVRA…QRAHPDRAKP (125 aa).

This sequence belongs to the GST superfamily. Zeta family.

The enzyme catalyses 4-maleylacetoacetate = 4-fumarylacetoacetate. The protein operates within amino-acid degradation; L-phenylalanine degradation; acetoacetate and fumarate from L-phenylalanine: step 5/6. This chain is Maleylacetoacetate isomerase (maiA), found in Rhizobium meliloti (strain 1021) (Ensifer meliloti).